Consider the following 332-residue polypeptide: Glycerol-3-phosphate dehydrogenase [NAD(P)+] (332 aa).

Residues serine 11, phenylalanine 12, lysine 32, and lysine 106 each contribute to the NADPH site. Sn-glycerol 3-phosphate contacts are provided by lysine 106, glycine 137, and serine 139. Alanine 141 serves as a coordination point for NADPH. Residues lysine 192, aspartate 245, serine 255, arginine 256, and asparagine 257 each contribute to the sn-glycerol 3-phosphate site. Lysine 192 (proton acceptor) is an active-site residue. Residue arginine 256 coordinates NADPH. NADPH contacts are provided by valine 280 and glutamate 282.

This sequence belongs to the NAD-dependent glycerol-3-phosphate dehydrogenase family.

It localises to the cytoplasm. The catalysed reaction is sn-glycerol 3-phosphate + NAD(+) = dihydroxyacetone phosphate + NADH + H(+). It carries out the reaction sn-glycerol 3-phosphate + NADP(+) = dihydroxyacetone phosphate + NADPH + H(+). Its pathway is membrane lipid metabolism; glycerophospholipid metabolism. Catalyzes the reduction of the glycolytic intermediate dihydroxyacetone phosphate (DHAP) to sn-glycerol 3-phosphate (G3P), the key precursor for phospholipid synthesis. This is Glycerol-3-phosphate dehydrogenase [NAD(P)+] from Staphylococcus aureus (strain bovine RF122 / ET3-1).